The sequence spans 173 residues: MSDQQQQQPGQDGQPFFNIQRVYLKDLSLEQPNSPHIFLEQEQPTVEVQVDVAATQLAEGVFEVTVIGTVTTKVKEKVAFLVEAKQAGIFDIRNVPVEQMDPLLGIACPTIVYPYLRSNIADTIGRAGFQPIHLAEINFQALYEQRLASAMEEAQAAGGNGGIVMPDGSKATH.

It belongs to the SecB family. Homotetramer, a dimer of dimers. One homotetramer interacts with 1 SecA dimer.

Its subcellular location is the cytoplasm. Its function is as follows. One of the proteins required for the normal export of preproteins out of the cell cytoplasm. It is a molecular chaperone that binds to a subset of precursor proteins, maintaining them in a translocation-competent state. It also specifically binds to its receptor SecA. In Ralstonia nicotianae (strain ATCC BAA-1114 / GMI1000) (Ralstonia solanacearum), this protein is Protein-export protein SecB.